A 282-amino-acid chain; its full sequence is Probable septum site-determining protein MinC (282 aa).

The tract at residues 108 to 127 is disordered; that stretch reads AAARSADEESANAAAAAPAA. The segment covering 118-127 has biased composition (low complexity); the sequence is ANAAAAAPAA.

It belongs to the MinC family. As to quaternary structure, interacts with MinD and FtsZ.

In terms of biological role, cell division inhibitor that blocks the formation of polar Z ring septums. Rapidly oscillates between the poles of the cell to destabilize FtsZ filaments that have formed before they mature into polar Z rings. Prevents FtsZ polymerization. This is Probable septum site-determining protein MinC from Paraburkholderia xenovorans (strain LB400).